The chain runs to 367 residues: Dual specificity protein phosphatase 1 (367 aa).

In terms of domain architecture, Rhodanese spans 20–137 (GAAQCLLLDC…FSASCPELCS (118 aa)). A Tyrosine-protein phosphatase domain is found at 173–314 (GPVEILSFLY…LLQFESQVLA (142 aa)). Catalysis depends on Cys258, which acts as the Phosphocysteine intermediate. Ser359 and Ser364 each carry phosphoserine; by MAPK1 and MAPK3.

This sequence belongs to the protein-tyrosine phosphatase family. Non-receptor class dual specificity subfamily. Post-translationally, phosphorylation at Ser-359 and Ser-364 by MAPK1/ERK2 and MAPK3/ERK1 reduces its rate of degradation. 'Lys-48'-linked polyubiquitinated by NEURL3, leading to proteasomal degradation.

It localises to the nucleus. It catalyses the reaction O-phospho-L-tyrosyl-[protein] + H2O = L-tyrosyl-[protein] + phosphate. The enzyme catalyses O-phospho-L-seryl-[protein] + H2O = L-seryl-[protein] + phosphate. The catalysed reaction is O-phospho-L-threonyl-[protein] + H2O = L-threonyl-[protein] + phosphate. Its function is as follows. Dual specificity phosphatase that dephosphorylates MAP kinase MAPK1/ERK2 on both 'Thr-183' and 'Tyr-185', regulating its activity during the meiotic cell cycle. The chain is Dual specificity protein phosphatase 1 from Mus musculus (Mouse).